A 245-amino-acid polypeptide reads, in one-letter code: MNATHILESHEANEQHHATNRSYWEVTYNILVIMSIVFSMATYLILDKDRFEKNPLLRFAIILLPLSCSAIQYLFLLYTNWKSNYEPEGTLHKALYYFFNVLLIAFAIISILSIIVLPINGWGNESDIAIYSVILPFFVVWSVDLVSTINDLTMETVHLIDTHYTMLFDLMMIITIIVNPKYSSQGYRYRQSPTPSSSRSTSSRTTKMRIVLLIIMLILAISMYAFIAWKCLTFLRNMQGKKWCN.

The protein belongs to the UPF0328 family.

The sequence is that of UPF0328 protein ECU09_2010 from Encephalitozoon cuniculi (strain GB-M1) (Microsporidian parasite).